A 504-amino-acid chain; its full sequence is Cytochrome P450 monooxygenase iccC (504 aa).

A helical membrane pass occupies residues 7–26 (LPWILLYTGFLAIFLSRLFS). N-linked (GlcNAc...) asparagine glycans are attached at residues asparagine 134, asparagine 312, asparagine 365, and asparagine 374. Residue cysteine 452 participates in heme binding. N-linked (GlcNAc...) asparagine glycosylation is present at asparagine 494.

Belongs to the cytochrome P450 family. Heme serves as cofactor.

The protein resides in the membrane. The catalysed reaction is (3E,5S)-3-[(2E,4E,8S,10E,12Z)-1-hydroxy-4,8-dimethyltetradeca-2,4,10,12-tetraen-1-ylidene]-5-[(4-hydroxyphenyl)methyl]pyrrolidine-2,4-dione + reduced [NADPH--hemoprotein reductase] + O2 = 3-[(2E,4E,8S,10E,12Z)-4,8-dimethyltetradeca-2,4,10,12-tetraenoyl]-4-hydroxy-5-(4-hydroxyphenyl)-1,2-dihydropyridin-2-one + oxidized [NADPH--hemoprotein reductase] + 2 H2O. It functions in the pathway mycotoxin biosynthesis. Its function is as follows. Cytochrome P450 monooxygenase; part of the gene cluster that mediates the biosynthesis of ilicicolin H, a 4-hydroxy-2-pyridonealkaloid that has potent and broad antifungal activities by inhibiting the mitochondrial respiration chain. IccC catalyzes the ring expansion of the tetramate intermediate to the acyclic 2-pyridone intermediate that contains the trans bis-diene chain. The biosynthesis of ilicicolin H starts with formation of the tetramic acid by the hybrid PKS-NRPS synthetase iccA with the partnering trans-enoyl reductase iccB since iccA lacks a designated enoylreductase (ER) domain. The cytochrome P450 monooxygenase iccC then catalyzes the ring expansion of the tetramate to the acyclic 2-pyridone. The pericyclase iccD further converts the acyclic 2-pyridone into 8-epi-ilicicolin H. Finally, the epimerase iccE converts 8-epi-ilicicolin H into ilicicolin H via epimerization. IccA to iccE are sufficient for ilicicolin H biosynthesis and the roles of the remaining enzymes, iccF, iccG and iccH within the pathway have still to be determined. This Talaromyces variabilis (Penicillium variabile) protein is Cytochrome P450 monooxygenase iccC.